The chain runs to 912 residues: Protein translocase subunit SecA (912 aa).

ATP is bound by residues Gln87, 105–109 (GEGKT), and Asp508. Residues 865–912 (DEEAAQVQSGNAPVPVSQVTRDEPKVGRNDPCPCGSGKKYKHCHGQLS) are disordered. Residues Cys896, Cys898, Cys907, and His908 each coordinate Zn(2+). Over residues 902–912 (KKYKHCHGQLS) the composition is skewed to basic residues.

Belongs to the SecA family. Monomer and homodimer. Part of the essential Sec protein translocation apparatus which comprises SecA, SecYEG and auxiliary proteins SecDF-YajC and YidC. The cofactor is Zn(2+).

It localises to the cell inner membrane. Its subcellular location is the cytoplasm. It carries out the reaction ATP + H2O + cellular proteinSide 1 = ADP + phosphate + cellular proteinSide 2.. Part of the Sec protein translocase complex. Interacts with the SecYEG preprotein conducting channel. Has a central role in coupling the hydrolysis of ATP to the transfer of proteins into and across the cell membrane, serving both as a receptor for the preprotein-SecB complex and as an ATP-driven molecular motor driving the stepwise translocation of polypeptide chains across the membrane. This Xanthomonas oryzae pv. oryzae (strain MAFF 311018) protein is Protein translocase subunit SecA.